Consider the following 819-residue polypeptide: MASTSTAGDRIKKFLGIPADERLNDTACYVDGSFVESEPTTQDFLNEIRPTVQGTLNYLRELFPFVNWIFHYNLTWLLGDFIAGVTVGFVVVPQGMAYAKLANLAPEYGLYTSFVGFVLYWAFATSKDITIGAVAVMSTIVGNIIANVQKDHPDFDAGDIARTLAFISGAMLLFLGLIRFGFIVEFIPIVAISAFMTGSAISIAAGQVSTLMGIPNINSREETYKVIINTLKGLPNTHLDAAMGLTALFGLYFIRWFCTQMGKRYPRQQRAWFFVSTLRMVFIIILYILVSWLVNRHVKDPKKAHFKILGHVPSGFQHKGAPRLDNEILSAISGDIPTTILVLLIEHIAISKSFGRVNNYIINPSQELVAIGFTNLLGPFLGGYPATGSFSRTAIKAKAGVRTPLAGIFTAVLVLLALYALTSVFFYIPNSALAAMIIHAVGDLITPPREVYKFWLTSPLEVVIFFAGVFVSIFTSIENGIYVTVAASGAVLLWRIAKSPGKFLGQTEIYTAPRELVRGSKDSGLTQSLLQKSEHHTAFLSLDRDDLSNPELQISTPWPGIFVYRFGEGLNYVNSAKHLDNLTIHVFKHTRRTELNKFEKLGDRPWNDPGPRRGQAFLTDELVSRPTLRAIILDFSAVNCIDVTAAQALQDLRNQFDRYAHPDKVEWHFAGVSNRWTKRALVASGFGVDSLRTAKVQRENHKGGVQEVDQGPLVAIGPSVSASDIEAVPVGTSGSGSTDEKRPEGEGGATNGGMEKGSANGEDISTVPTATSADACALARDAGGKRLVPVFGINRPFFHIDVATALKSAVRNTGVVAAE.

N-linked (GlcNAc...) asparagine glycosylation occurs at asparagine 24. The next 10 helical transmembrane spans lie at 72-92 (YNLT…FVVV), 104-124 (LAPE…WAFA), 129-149 (ITIG…ANVQ), 172-192 (LLFL…IVAI), 194-214 (AFMT…LMGI), 273-293 (FFVS…VSWL), 328-348 (ILSA…IEHI), 365-385 (SQEL…GGYP), 454-474 (FWLT…VSIF), and 477-497 (IENG…WRIA). Residues 551–708 (ELQISTPWPG…ENHKGGVQEV (158 aa)) enclose the STAS domain. Asparagine 581 carries an N-linked (GlcNAc...) asparagine glycan. Positions 726-766 (EAVPVGTSGSGSTDEKRPEGEGGATNGGMEKGSANGEDIST) are disordered. Gly residues predominate over residues 746–755 (EGGATNGGME).

Belongs to the SLC26A/SulP transporter (TC 2.A.53) family. Mainly found in mycelia.

The protein resides in the membrane. Its function is as follows. Uptake of sulfate into the cell. The polypeptide is Sulfate permease 2 (cys-14) (Neurospora crassa (strain ATCC 24698 / 74-OR23-1A / CBS 708.71 / DSM 1257 / FGSC 987)).